Reading from the N-terminus, the 228-residue chain is Cytochrome c oxidase subunit 2 (228 aa).

The Mitochondrial intermembrane portion of the chain corresponds to 1–14 (MAYPLQLGLQDASS). The chain crosses the membrane as a helical span at residues 15–45 (PIMEELTNFHDHTLMIVFLISSLVLYLISLM). At 46–59 (LTTKLIHTSTMDAQ) the chain is on the mitochondrial matrix side. Residues 60 to 87 (EVETIWTILPAIILILIALPSLRILYMM) form a helical membrane-spanning segment. Residues 88 to 228 (DEINNPVLTV…FENWSVSMTQ (141 aa)) lie on the Mitochondrial intermembrane side of the membrane. 6 residues coordinate Cu cation: H161, C196, E198, C200, H204, and M207. E198 lines the Mg(2+) pocket.

This sequence belongs to the cytochrome c oxidase subunit 2 family. As to quaternary structure, component of the cytochrome c oxidase (complex IV, CIV), a multisubunit enzyme composed of 14 subunits. The complex is composed of a catalytic core of 3 subunits MT-CO1, MT-CO2 and MT-CO3, encoded in the mitochondrial DNA, and 11 supernumerary subunits COX4I, COX5A, COX5B, COX6A, COX6B, COX6C, COX7A, COX7B, COX7C, COX8 and NDUFA4, which are encoded in the nuclear genome. The complex exists as a monomer or a dimer and forms supercomplexes (SCs) in the inner mitochondrial membrane with NADH-ubiquinone oxidoreductase (complex I, CI) and ubiquinol-cytochrome c oxidoreductase (cytochrome b-c1 complex, complex III, CIII), resulting in different assemblies (supercomplex SCI(1)III(2)IV(1) and megacomplex MCI(2)III(2)IV(2)). Found in a complex with TMEM177, COA6, COX18, COX20, SCO1 and SCO2. Interacts with TMEM177 in a COX20-dependent manner. Interacts with COX20. Interacts with COX16. Cu cation serves as cofactor.

The protein resides in the mitochondrion inner membrane. It carries out the reaction 4 Fe(II)-[cytochrome c] + O2 + 8 H(+)(in) = 4 Fe(III)-[cytochrome c] + 2 H2O + 4 H(+)(out). Its function is as follows. Component of the cytochrome c oxidase, the last enzyme in the mitochondrial electron transport chain which drives oxidative phosphorylation. The respiratory chain contains 3 multisubunit complexes succinate dehydrogenase (complex II, CII), ubiquinol-cytochrome c oxidoreductase (cytochrome b-c1 complex, complex III, CIII) and cytochrome c oxidase (complex IV, CIV), that cooperate to transfer electrons derived from NADH and succinate to molecular oxygen, creating an electrochemical gradient over the inner membrane that drives transmembrane transport and the ATP synthase. Cytochrome c oxidase is the component of the respiratory chain that catalyzes the reduction of oxygen to water. Electrons originating from reduced cytochrome c in the intermembrane space (IMS) are transferred via the dinuclear copper A center (CU(A)) of subunit 2 and heme A of subunit 1 to the active site in subunit 1, a binuclear center (BNC) formed by heme A3 and copper B (CU(B)). The BNC reduces molecular oxygen to 2 water molecules using 4 electrons from cytochrome c in the IMS and 4 protons from the mitochondrial matrix. The chain is Cytochrome c oxidase subunit 2 (MT-CO2) from Meriones shawi (Shaw's jird).